Here is a 203-residue protein sequence, read N- to C-terminus: Shikimate kinase (203 aa).

An ATP-binding site is contributed by 32–37 (GAGKTA). Residue Thr-36 coordinates Mg(2+). Asp-54, Arg-78, and Gly-100 together coordinate substrate. An ATP-binding site is contributed by Arg-138. Substrate is bound at residue Arg-157.

The protein belongs to the shikimate kinase family. As to quaternary structure, monomer. It depends on Mg(2+) as a cofactor.

The protein localises to the cytoplasm. The catalysed reaction is shikimate + ATP = 3-phosphoshikimate + ADP + H(+). The protein operates within metabolic intermediate biosynthesis; chorismate biosynthesis; chorismate from D-erythrose 4-phosphate and phosphoenolpyruvate: step 5/7. In terms of biological role, catalyzes the specific phosphorylation of the 3-hydroxyl group of shikimic acid using ATP as a cosubstrate. In Mesorhizobium japonicum (strain LMG 29417 / CECT 9101 / MAFF 303099) (Mesorhizobium loti (strain MAFF 303099)), this protein is Shikimate kinase.